The chain runs to 584 residues: MQFGELVKTLAAVESTTQRTTMVKLLTSLLKRARPDEVDKIVYFVLGDLKPPWEGVELGVAEKLCLRAVSKAAGTPLSELEAVYKRTGDVGEAARRALSAAKRPGLLAFGQQKPLEVSEVYDTLLKVAKAAGEGAQDMKISLLASLFARATPEEAKYIARFVVGKLRLGVADMTLLEALSEAFGVGKEALERAYHVWPDMGKLARHVAEGRPLEEVKITPGVPVLPMLAQRLSSASEILAKLGGAAVCEYKYDGERAQIHISGGSVKIFSRRLEDITHAYPDVVKAVKESVAAGEAILEGEIVAVDPDTGDMLPFQELMHRKRKHEVAAAVESYPAVLNLFDVLYLDGEDLTGEPLIYRRLRLSEVVHETEKVSIARWRLFDDPGEVDVFFHEAVSLGMEGLVCKSPTSIYEMGARGWNWIKYKRDYKSEMIDTVDLVVVGAFYGRGKRAGLYGAFLLAAYDPQTDMFYTVCKVGSGFTDADLKKMYEVLQPYKIPHRHPRVVSKMTPDVWFTPQVVIEVIGAEITLSPLHTCCLGAVRPGVGLAIRFPRFTGRYRTDKSPEQATTPAEMVELYKRQKKVAQPE.

E249 lines the ATP pocket. The active-site N6-AMP-lysine intermediate is the K251. Positions 256, 271, 301, 341, 416, and 422 each coordinate ATP.

Belongs to the ATP-dependent DNA ligase family. Requires Mg(2+) as cofactor.

It catalyses the reaction ATP + (deoxyribonucleotide)n-3'-hydroxyl + 5'-phospho-(deoxyribonucleotide)m = (deoxyribonucleotide)n+m + AMP + diphosphate.. In terms of biological role, DNA ligase that seals nicks in double-stranded DNA during DNA replication, DNA recombination and DNA repair. The chain is DNA ligase from Pyrobaculum neutrophilum (strain DSM 2338 / JCM 9278 / NBRC 100436 / V24Sta) (Thermoproteus neutrophilus).